We begin with the raw amino-acid sequence, 178 residues long: M-phase-specific PLK1-interacting protein (178 aa).

Residues 1-15 (MHRPNFRPPTPPYPS) show a composition bias toward pro residues. The segment at 1 to 134 (MHRPNFRPPT…RGREKRMSNE (134 aa)) is disordered. Residues 17–34 (GIGGWGGGNNFRGALGGG) are compositionally biased toward gly residues. Position 36 is an asymmetric dimethylarginine (R36). Phosphoserine occurs at positions 39 and 46. At T50 the chain carries Phosphothreonine. At R56 the chain carries Omega-N-methylarginine. Residues R58, R67, and R76 each carry the asymmetric dimethylarginine modification. Over residues 78–96 (GSPSPGGYPGSYSRSPAGS) the composition is skewed to low complexity. Phosphoserine is present on residues S79, S81, S92, S103, and S114. Polar residues predominate over residues 97 to 121 (QHQFGYSPGQQQTYPQGSPRTSTPF). R116 is modified (omega-N-methylarginine). At T119 the chain carries Phosphothreonine. 2 positions are modified to phosphoserine: S123 and S132.

In terms of assembly, interacts with PLK1; phosphorylation-dependent. Phosphorylated during mitosis in the cell cycle probably by CDK1.

The protein localises to the nucleus. It localises to the cytoplasm. It is found in the cytoskeleton. The protein resides in the microtubule organizing center. Its subcellular location is the centrosome. Functionally, may play a role in maintenance of cell cycle integrity by regulating mitosis or cytokinesis. The protein is M-phase-specific PLK1-interacting protein (Mplkip) of Mus musculus (Mouse).